Consider the following 546-residue polypeptide: Cysteine desulfurase SufS (546 aa).

The N-terminal stretch at methionine 1–cysteine 22 is a signal peptide. The residue at position 291 (lysine 291) is an N6-(pyridoxal phosphate)lysine. Cysteine 497 serves as the catalytic Cysteine persulfide intermediate.

This sequence belongs to the class-V pyridoxal-phosphate-dependent aminotransferase family. Csd subfamily. In terms of assembly, monomer. Interacts with SufE; interaction enhances cysteine desulfurase activity of SufS. Pyridoxal 5'-phosphate is required as a cofactor. Post-translationally, proteolytically cleaved.

It is found in the plastid. It localises to the apicoplast. It catalyses the reaction (sulfur carrier)-H + L-cysteine = (sulfur carrier)-SH + L-alanine. It functions in the pathway cofactor biosynthesis; iron-sulfur cluster biosynthesis. Its function is as follows. Catalyzes sulfur activation and mobilization in sulfur mobilization (SUF) pathway for iron-sulfur (Fe-S) cluster biogenesis. Active when in complex with a partner protein SufE. Required for apicoplast maintenance. Plays a role in the development of sporozoites in oocysts in mosquitoes. May provide sulfur for MNMA-mediated tRNA modifications. The protein is Cysteine desulfurase SufS of Plasmodium falciparum (isolate 3D7).